The sequence spans 370 residues: Probable neutral protease 2 homolog ARB_03949 (370 aa).

The first 19 residues, 1 to 19 (MQLVAALAALGALVAPAVA), serve as a signal peptide directing secretion. A propeptide spanning residues 20-188 (YPHAPMNETL…SIHSRALQKR (169 aa)) is cleaved from the precursor. 2 cysteine pairs are disulfide-bonded: C196/C267 and C274/C292. H316 is a Zn(2+) binding site. E317 is an active-site residue. Residues H320 and D331 each coordinate Zn(2+).

The protein belongs to the peptidase M35 family. Requires Zn(2+) as cofactor.

The protein resides in the secreted. The catalysed reaction is Preferential cleavage of bonds with hydrophobic residues in P1'. Also 3-Asn-|-Gln-4 and 8-Gly-|-Ser-9 bonds in insulin B chain.. Functionally, probable secreted metalloprotease that shows high activities on basic nuclear substrates such as histone and protamine. May be involved in virulence. This Arthroderma benhamiae (strain ATCC MYA-4681 / CBS 112371) (Trichophyton mentagrophytes) protein is Probable neutral protease 2 homolog ARB_03949.